Here is a 1548-residue protein sequence, read N- to C-terminus: Zinc finger MYM-type protein 4 (1548 aa).

The residue at position 2 (A2) is an N-acetylalanine. T107 bears the Phosphothreonine mark. 2 positions are modified to phosphoserine: S110 and S122. Glycyl lysine isopeptide (Lys-Gly) (interchain with G-Cter in SUMO2) cross-links involve residues K140 and K149. S162 is modified (phosphoserine). The disordered stretch occupies residues 162-189 (SKETFSGKEKNRDLTYEREKRLDKPHKD). A Glycyl lysine isopeptide (Lys-Gly) (interchain with G-Cter in SUMO2) cross-link involves residue K195. Phosphoserine is present on S197. Residues K201 and K232 each participate in a glycyl lysine isopeptide (Lys-Gly) (interchain with G-Cter in SUMO2) cross-link. Position 242 is a phosphoserine (S242). A Glycyl lysine isopeptide (Lys-Gly) (interchain with G-Cter in SUMO1); alternate cross-link involves residue K250. K250 participates in a covalent cross-link: Glycyl lysine isopeptide (Lys-Gly) (interchain with G-Cter in SUMO2); alternate. Residues K260, K271, K273, K289, K327, K400, K428, and K430 each participate in a glycyl lysine isopeptide (Lys-Gly) (interchain with G-Cter in SUMO2) cross-link. 9 MYM-type zinc fingers span residues 362-402 (QLFC…PKDV), 414-457 (KDFC…RHEV), 464-499 (HKLCSDACFSKFRSANNLTMNCCENCGGYCYSGSGQ), 510-544 (KKFCSSSCITAYKQKSAKITPCALCKSLRSSAEMI), 554-592 (ELFCSVNCLSAYRVKMVTSAGVQVQCNSCKTSAIPQYHL), 600-631 (RNFCSYSCVVAFQNLFNKPTGMNSSVVPLSQG), 708-742 (FQFCGKNCSDEYKKINNVMAMCEYCKIEKIVKETV), 749-788 (KSFCSEGCKLLYKHDLAKRWGNHCKMCSYCLQTSPKLVQN), and 795-829 (EEFCCEECMSKYTVLFYQMAKCDACKRQGKLSESL). At S1030 the chain carries Phosphoserine. Glycyl lysine isopeptide (Lys-Gly) (interchain with G-Cter in SUMO2) cross-links involve residues K1035 and K1061. Residues S1064 and S1071 each carry the phosphoserine modification. Glycyl lysine isopeptide (Lys-Gly) (interchain with G-Cter in SUMO2) cross-links involve residues K1080 and K1127. Positions 1124-1134 (SELKQFSKGET) are enriched in basic and acidic residues. Disordered regions lie at residues 1124–1183 (SELK…KSIV) and 1231–1260 (KCGGVEQASSSPRSDPLGSTQDHALSQESS). The segment covering 1160 to 1181 (SRTRRRHRDGFPQPRRRGRKKS) has biased composition (basic residues). S1181 and S1256 each carry phosphoserine. Residues 1237–1260 (QASSSPRSDPLGSTQDHALSQESS) are compositionally biased toward polar residues. K1431 participates in a covalent cross-link: Glycyl lysine isopeptide (Lys-Gly) (interchain with G-Cter in SUMO2). Residues S1539, S1542, and S1547 each carry the phosphoserine modification.

Expressed at higher level in heart, skeletal muscle, kidney and liver.

Functionally, plays a role in the regulation of cell morphology and cytoskeletal organization. The sequence is that of Zinc finger MYM-type protein 4 (ZMYM4) from Homo sapiens (Human).